A 147-amino-acid chain; its full sequence is Cyanate hydratase (147 aa).

Catalysis depends on residues R88, E91, and S114.

It belongs to the cyanase family.

The enzyme catalyses cyanate + hydrogencarbonate + 3 H(+) = NH4(+) + 2 CO2. Catalyzes the reaction of cyanate with bicarbonate to produce ammonia and carbon dioxide. The chain is Cyanate hydratase from Parasynechococcus marenigrum (strain WH8102).